The sequence spans 253 residues: 3-deoxy-manno-octulosonate cytidylyltransferase (253 aa).

Belongs to the KdsB family.

The protein resides in the cytoplasm. It catalyses the reaction 3-deoxy-alpha-D-manno-oct-2-ulosonate + CTP = CMP-3-deoxy-beta-D-manno-octulosonate + diphosphate. Its pathway is nucleotide-sugar biosynthesis; CMP-3-deoxy-D-manno-octulosonate biosynthesis; CMP-3-deoxy-D-manno-octulosonate from 3-deoxy-D-manno-octulosonate and CTP: step 1/1. It functions in the pathway bacterial outer membrane biogenesis; lipopolysaccharide biosynthesis. Functionally, activates KDO (a required 8-carbon sugar) for incorporation into bacterial lipopolysaccharide in Gram-negative bacteria. This chain is 3-deoxy-manno-octulosonate cytidylyltransferase, found in Edwardsiella ictaluri (strain 93-146).